Consider the following 1402-residue polypeptide: DNA-directed RNA polymerase subunit beta' (1402 aa).

Zn(2+)-binding residues include cysteine 73, cysteine 75, cysteine 88, and cysteine 91. The Mg(2+) site is built by aspartate 464, aspartate 466, and aspartate 468. Cysteine 812, cysteine 886, cysteine 893, and cysteine 896 together coordinate Zn(2+).

Belongs to the RNA polymerase beta' chain family. As to quaternary structure, the RNAP catalytic core consists of 2 alpha, 1 beta, 1 beta' and 1 omega subunit. When a sigma factor is associated with the core the holoenzyme is formed, which can initiate transcription. It depends on Mg(2+) as a cofactor. Requires Zn(2+) as cofactor.

The catalysed reaction is RNA(n) + a ribonucleoside 5'-triphosphate = RNA(n+1) + diphosphate. Functionally, DNA-dependent RNA polymerase catalyzes the transcription of DNA into RNA using the four ribonucleoside triphosphates as substrates. The polypeptide is DNA-directed RNA polymerase subunit beta' (Rhodopseudomonas palustris (strain ATCC BAA-98 / CGA009)).